Reading from the N-terminus, the 105-residue chain is Thioredoxin (105 aa).

In terms of domain architecture, Thioredoxin spans 2-105; the sequence is VKIVGDLTEF…KLEEAIKKYM (104 aa). Active-site nucleophile residues include C32 and C35. C32 and C35 are oxidised to a cystine. 2 positions are modified to S-nitrosocysteine: C69 and C73.

It belongs to the thioredoxin family. In terms of processing, may be nitrosylated on several cysteine residues, depending on the oxidation state. Nitrosylated Cys-73 may serve as donor for nitrosylation of target proteins.

Its subcellular location is the nucleus. The protein resides in the cytoplasm. It localises to the secreted. Functionally, participates in various redox reactions through the reversible oxidation of its active center dithiol to a disulfide and catalyzes dithiol-disulfide exchange reactions. Plays a role in the reversible S-nitrosylation of cysteine residues in target proteins, and thereby contributes to the response to intracellular nitric oxide. Nitrosylates the active site Cys of CASP3 in response to nitric oxide (NO), and thereby inhibits caspase-3 activity. Induces the FOS/JUN AP-1 DNA binding activity in ionizing radiation (IR) cells through its oxidation/reduction status and stimulates AP-1 transcriptional activity. This chain is Thioredoxin (TXN), found in Ophiophagus hannah (King cobra).